The chain runs to 841 residues: MNLLYRKTKLEWRQHKEEEAKRSSSKEVAPAGSAGPAAGQGPGVRVRDIASLRRSLRMGFMTMPASQEHTPHPCRSAMAPRSLSCHSVGSMDSVGGGPGGASGGLTEDSSTRRPPAKPRRHPSTKLSMVGPGSGAETPPSKKAGSQKPTPEGRESSRKVPPQKPRRSPNTQLSVSFDESCPPGPSPRGGNLPLQRLTRGSRVAGDPDVGAQEEPVYIEMVGDVFRGGGRSGGGLAGPPLGGGGPTPPAGADSDSEESEAIYEEMKYPLPEEAGEGRANGPPPLTATSPPQQPHALPPHAHRRPASALPSRRDGTPTKTTPCEIPPPFPNLLQHRPPLLAFPQAKSASRTPGDGVSRLPVLCHSKEPAGSTPAPQVPARERETPPPPPPPPAANLLLLGPSGRARSHSTPLPPQGSGQPRGERELPNSHSMICPKAAGAPAAPPAPAALLPGPPKDKAVSYTMVYSAVKVTTHSVLPAGPPLGAGEPKTEKEISVLHGMLCTSSRPPVPGKTSPHGGAMGAAAGVLHHRGCLASPHSLPDPTVGPLTPLWTYPATAAGLKRPPAYESLKAGGVLNKGCGVGAPSPMVKIQLQEQGTDGGAFASISCAHVIASAGTPEEEEEEVGAATFGAGWALQRKVLYGGRKAKELDKVEDGARAWNGSAEGPGKVEREDRGPGTSGIPVRSQGAEGLLARIHHGDRGGSRTALPIPCQTFPACHRNGDFTGGYRLGRSASTSGVRQVVLHTPRPCSQPRDALSQPHPALPLPLPLPPQPARERDGKLLEVIERKRCVCKEIKARHRPDRGLCKQESMPILPSWRRGPEPRKSGTPPCRRQHTVLWDTAI.

Disordered stretches follow at residues 1 to 45 (MNLL…PGVR), 64 to 448 (PASQ…PAAL), 655 to 679 (RAWN…TSGI), 745 to 769 (RPCS…PLPP), and 812 to 833 (LPSW…RRQH). Basic and acidic residues predominate over residues 8–25 (TKLEWRQHKEEEAKRSSS). The span at 26–39 (KEVAPAGSAGPAAG) shows a compositional bias: low complexity. The tract at residues 76–186 (SAMAPRSLSC…DESCPPGPSP (111 aa)) is involved in CYFIP1- and NCKAP1-binding. Over residues 94-103 (VGGGPGGASG) the composition is skewed to gly residues. The span at 114–123 (PPAKPRRHPS) shows a compositional bias: basic residues. Residues 167–176 (SPNTQLSVSF) show a composition bias toward polar residues. The span at 224–243 (FRGGGRSGGGLAGPPLGGGG) shows a compositional bias: gly residues. The segment covering 252–261 (SDSEESEAIY) has biased composition (acidic residues). Positions 279 to 295 (GPPPLTATSPPQQPHAL) are enriched in pro residues. Pro residues predominate over residues 759 to 769 (PALPLPLPLPP).

This sequence belongs to the NYAP family. As to quaternary structure, interacts with ACOT9, ARHGAP26 and PIK3R2. Interacts with components of the WAVE1 complex, CYFIP1 and NCKAP1; this interaction mediates PI3K-WAVE1 association and actin cytoskeleton remodeling. Post-translationally, phosphorylated on tyrosine residues by FYN upon stimulation with CNTN5.

In terms of biological role, activates PI3K and concomitantly recruits the WAVE1 complex to the close vicinity of PI3K and regulates neuronal morphogenesis. In Homo sapiens (Human), this protein is Neuronal tyrosine-phosphorylated phosphoinositide-3-kinase adapter 1 (NYAP1).